Here is a 416-residue protein sequence, read N- to C-terminus: Muscle-specific homeobox protein tinman (416 aa).

Polar residues-rich tracts occupy residues 1–11 (MLQHHQQQAQS) and 18–33 (YTQS…ADAL). Disordered regions lie at residues 1 to 33 (MLQH…ADAL), 246 to 305 (TASN…RKPR), and 391 to 416 (VMWP…MQHM). Over residues 281–295 (NSISGNSNPGSNSGS) the composition is skewed to low complexity. Positions 301 to 360 (KRKPRVLFSQAQVLELECRFRLKKYLTGAEREIIAQKLNLSATQVKIWFQNRRYKSKRGD) form a DNA-binding region, homeobox. The segment covering 397–416 (MQQSQQQQQHHAQQQQMQHM) has biased composition (low complexity).

It localises to the nucleus. In terms of biological role, required for the development of heart and visceral muscle; for the formation of somatic muscles. Has a crucial function in the early mesodermal subdivisions. In Drosophila melanogaster (Fruit fly), this protein is Muscle-specific homeobox protein tinman (tin).